Reading from the N-terminus, the 175-residue chain is MKVEGGESMHESEEGRDVPNGITKHKHHIPFQCIVSLPSGFQIEKPNDLKLVYDVSHLSMTKDTCKKRIEIDECGQVEIDLQVLKIKGVLSFIGNFSIEPIVCENMYTTVDRNPSISLSFQDTVYVDHILKYSVQQLPHYVIDGDHIQVRELQIKLMKENPQSAQISGLFCFVYE.

Basic and acidic residues predominate over residues 1–17 (MKVEGGESMHESEEGRD). Residues 1-21 (MKVEGGESMHESEEGRDVPNG) form a disordered region.

This is an uncharacterized protein from Bacillus thuringiensis subsp. kurstaki.